Here is a 339-residue protein sequence, read N- to C-terminus: Fructose-1,6-bisphosphatase isozyme 2 (339 aa).

Positions 3–10 (DRSPFETD) are important for interaction with ALDOA. Residues valine 18 and 28–32 (TGELT) each bind AMP. Positions 69 and 98 each coordinate Mg(2+). 113–114 (KY) is an AMP binding site. Residues aspartate 119, leucine 121, and aspartate 122 each coordinate Mg(2+). Aspartate 122 serves as a coordination point for substrate. Arginine 141 contributes to the AMP binding site. Positions 204 to 208 (KKKGK) match the Nuclear localization signal motif. 213-216 (NEGY) provides a ligand contact to substrate. Phosphotyrosine occurs at positions 216 and 219. Substrate contacts are provided by residues 245–249 (YVGSM), tyrosine 265, and lysine 275. Position 281 (glutamate 281) interacts with Mg(2+).

This sequence belongs to the FBPase class 1 family. Homotetramer. Interacts with ALDOA; the interaction blocks inhibition by physiological concentrations of AMP and reduces inhibition by Ca(2+). Interacts with alpha-actinin and F-actin. It depends on Mg(2+) as a cofactor. Expressed in muscle, intestine, brain and placenta and very weakly in liver.

It localises to the cell junction. It is found in the cytoplasm. The protein resides in the nucleus. Its subcellular location is the myofibril. The protein localises to the sarcomere. It localises to the z line. The enzyme catalyses beta-D-fructose 1,6-bisphosphate + H2O = beta-D-fructose 6-phosphate + phosphate. It functions in the pathway carbohydrate biosynthesis; gluconeogenesis. With respect to regulation, subject to complex allosteric regulation. The enzyme can assume an active R-state, or an inactive T-state. Intermediate conformations may exist. AMP acts as an allosteric inhibitor. Fructose 2,6-bisphosphate acts as a competitive inhibitor. Strongly inhibited by Ca(2+). Functionally, catalyzes the hydrolysis of fructose 1,6-bisphosphate to fructose 6-phosphate in the presence of divalent cations and probably participates in glycogen synthesis from carbohydrate precursors, such as lactate. The sequence is that of Fructose-1,6-bisphosphatase isozyme 2 (Fbp2) from Mus musculus (Mouse).